Here is a 280-residue protein sequence, read N- to C-terminus: uncharacterized protein (280 aa).

This is an uncharacterized protein from Aedes vexans (Inland floodwater mosquito).